Here is a 978-residue protein sequence, read N- to C-terminus: Rab3 GTPase-activating protein catalytic subunit (978 aa).

3 disordered regions span residues 533 to 554 (EGKK…TASD), 586 to 621 (HSDT…RLHQ), and 908 to 936 (EEEP…GREL). The segment covering 540–554 (LYSSSESSVNKTASD) has biased composition (polar residues). 2 stretches are compositionally biased toward basic and acidic residues: residues 586–619 (HSDT…EGRL) and 909–922 (EEPK…DRRQ).

Belongs to the Rab3-GAP catalytic subunit family. The Rab3 GTPase-activating complex is a heterodimer composed of rab3gap1 and rab3gap2. The Rab3 GTPase-activating complex interacts with DMXL2. Interacts with LMAN1.

It is found in the cytoplasm. The protein localises to the endoplasmic reticulum. Its subcellular location is the golgi apparatus. The protein resides in the cis-Golgi network. In terms of biological role, catalytic subunit of the Rab3 GTPase-activating (Rab3GAP) complex composed of rab3gap1 and rab3gap2, which has GTPase-activating protein (GAP) activity towards various Rab3 subfamily members (RAB3A, RAB3B, RAB3C and RAB3D), RAB5A and RAB43, and guanine nucleotide exchange factor (GEF) activity towards RAB18. As part of the Rab3GAP complex, acts as a GAP for Rab3 proteins by converting active RAB3-GTP to the inactive form RAB3-GDP. Rab3 proteins are involved in regulated exocytosis of neurotransmitters and hormones. The Rab3GAP complex, acts as a GEF for RAB18 by promoting the conversion of inactive RAB18-GDP to the active form RAB18-GTP. Recruits and stabilizes RAB18 at the cis-Golgi membrane where RAB18 is most likely activated. Also involved in RAB18 recruitment at the endoplasmic reticulum (ER) membrane where it maintains proper ER structure. Required for normal eye and brain development. May participate in neurodevelopmental processes such as proliferation, migration and differentiation before synapse formation, and non-synaptic vesicular release of neurotransmitters. The protein is Rab3 GTPase-activating protein catalytic subunit (rab3gap1) of Xenopus laevis (African clawed frog).